A 478-amino-acid chain; its full sequence is Glycogen synthase (478 aa).

Lys20 is an ADP-alpha-D-glucose binding site.

The protein belongs to the glycosyltransferase 1 family. Bacterial/plant glycogen synthase subfamily.

The catalysed reaction is [(1-&gt;4)-alpha-D-glucosyl](n) + ADP-alpha-D-glucose = [(1-&gt;4)-alpha-D-glucosyl](n+1) + ADP + H(+). The protein operates within glycan biosynthesis; glycogen biosynthesis. Functionally, synthesizes alpha-1,4-glucan chains using ADP-glucose. This Cereibacter sphaeroides (strain ATCC 17023 / DSM 158 / JCM 6121 / CCUG 31486 / LMG 2827 / NBRC 12203 / NCIMB 8253 / ATH 2.4.1.) (Rhodobacter sphaeroides) protein is Glycogen synthase.